We begin with the raw amino-acid sequence, 461 residues long: tRNA modification GTPase MnmE (461 aa).

The (6S)-5-formyl-5,6,7,8-tetrahydrofolate site is built by Arg27, Glu89, and Arg128. In terms of domain architecture, TrmE-type G spans 224-382; it reads GLATAIVGQP…LEELINKLFF (159 aa). Asn234 contacts K(+). GTP-binding positions include 234–239, 253–259, and 278–281; these read NVGKSS, TDVAGTT, and DTAG. Ser238 serves as a coordination point for Mg(2+). K(+) contacts are provided by Thr253, Val255, and Thr258. Thr259 provides a ligand contact to Mg(2+). Position 461 (Lys461) interacts with (6S)-5-formyl-5,6,7,8-tetrahydrofolate.

Belongs to the TRAFAC class TrmE-Era-EngA-EngB-Septin-like GTPase superfamily. TrmE GTPase family. In terms of assembly, homodimer. Heterotetramer of two MnmE and two MnmG subunits. Requires K(+) as cofactor.

The protein localises to the cytoplasm. Exhibits a very high intrinsic GTPase hydrolysis rate. Involved in the addition of a carboxymethylaminomethyl (cmnm) group at the wobble position (U34) of certain tRNAs, forming tRNA-cmnm(5)s(2)U34. In Lactobacillus acidophilus (strain ATCC 700396 / NCK56 / N2 / NCFM), this protein is tRNA modification GTPase MnmE.